Reading from the N-terminus, the 407-residue chain is Arginine biosynthesis bifunctional protein ArgJ (407 aa).

6 residues coordinate substrate: T169, K192, T203, E283, N402, and S407. The Nucleophile role is filled by T203.

The protein belongs to the ArgJ family. In terms of assembly, heterotetramer of two alpha and two beta chains.

It is found in the cytoplasm. It carries out the reaction N(2)-acetyl-L-ornithine + L-glutamate = N-acetyl-L-glutamate + L-ornithine. It catalyses the reaction L-glutamate + acetyl-CoA = N-acetyl-L-glutamate + CoA + H(+). It participates in amino-acid biosynthesis; L-arginine biosynthesis; L-ornithine and N-acetyl-L-glutamate from L-glutamate and N(2)-acetyl-L-ornithine (cyclic): step 1/1. It functions in the pathway amino-acid biosynthesis; L-arginine biosynthesis; N(2)-acetyl-L-ornithine from L-glutamate: step 1/4. Functionally, catalyzes two activities which are involved in the cyclic version of arginine biosynthesis: the synthesis of N-acetylglutamate from glutamate and acetyl-CoA as the acetyl donor, and of ornithine by transacetylation between N(2)-acetylornithine and glutamate. This Mycobacterium leprae (strain TN) protein is Arginine biosynthesis bifunctional protein ArgJ.